The following is an 822-amino-acid chain: AP-1 complex subunit gamma-1 (822 aa).

Residues 593-604 (NGPSEIVQTNGE) are compositionally biased toward polar residues. Residues 593 to 627 (NGPSEIVQTNGETEPAPLETKPPPSGPQPTSQAND) are disordered. The GAE domain maps to 702–817 (PGIPSITAYS…QDLAEVNNFP (116 aa)).

The protein belongs to the adaptor complexes large subunit family. As to quaternary structure, adaptor protein complex 1 (AP-1) is a heterotetramer composed of two large adaptins (gamma-type subunit AP1G1 and beta-type subunit AP1B1), a medium adaptin (mu-type subunit AP1M1 or AP1M2) and a small adaptin (sigma-type subunit AP1S1 or AP1S2 or AP1S3). Interacts (via GAE domain) with RABEP1. Interacts with EPS15. Interacts with SYNRG/gamma-synergin. Interacts (via GAE domain) with AP1AR (via coiled-coil domain). Interacts with CLN3 (via dileucine motif); this interaction facilitates lysosomal targeting. Interacts (via GAE domain) with AFTPH/aftiphilin; the interaction is required to recruit AFTPH/aftiphilin to the perinuclear region of the cell. As to expression, widely expressed.

The protein localises to the golgi apparatus. The protein resides in the cytoplasmic vesicle. Its subcellular location is the clathrin-coated vesicle membrane. It is found in the cytoplasm. It localises to the perinuclear region. The protein localises to the clathrin-coated vesicle. The protein resides in the membrane. Its subcellular location is the clathrin-coated pit. Its function is as follows. Subunit of clathrin-associated adaptor protein complex 1 that plays a role in protein sorting in the late-Golgi/trans-Golgi network (TGN) and/or endosomes. The AP complexes mediate both the recruitment of clathrin to membranes and the recognition of sorting signals within the cytosolic tails of transmembrane cargo molecules. In association with AFTPH/aftiphilin in the aftiphilin/p200/gamma-synergin complex, involved in the trafficking of transferrin from early to recycling endosomes, and the membrane trafficking of furin and the lysosomal enzyme cathepsin D between the trans-Golgi network (TGN) and endosomes. In Mus musculus (Mouse), this protein is AP-1 complex subunit gamma-1 (Ap1g1).